A 495-amino-acid chain; its full sequence is GTPase Der (495 aa).

2 consecutive EngA-type G domains span residues Pro3 to Glu166 and Ile208 to Thr381. GTP contacts are provided by residues Gly9–Ser16, Asp56–Ile60, Asn118–Asp121, Gly214–Ser221, Asp261–Val265, and Asn326–Asp329. The region spanning Lys382–Glu466 is the KH-like domain.

This sequence belongs to the TRAFAC class TrmE-Era-EngA-EngB-Septin-like GTPase superfamily. EngA (Der) GTPase family. As to quaternary structure, associates with the 50S ribosomal subunit.

In terms of biological role, GTPase that plays an essential role in the late steps of ribosome biogenesis. This chain is GTPase Der, found in Yersinia pseudotuberculosis serotype O:3 (strain YPIII).